The following is a 156-amino-acid chain: Small ribosomal subunit protein uS7 (156 aa).

The protein belongs to the universal ribosomal protein uS7 family. As to quaternary structure, part of the 30S ribosomal subunit. Contacts proteins S9 and S11.

In terms of biological role, one of the primary rRNA binding proteins, it binds directly to 16S rRNA where it nucleates assembly of the head domain of the 30S subunit. Is located at the subunit interface close to the decoding center, probably blocks exit of the E-site tRNA. The polypeptide is Small ribosomal subunit protein uS7 (Pelobacter propionicus (strain DSM 2379 / NBRC 103807 / OttBd1)).